We begin with the raw amino-acid sequence, 404 residues long: MKLPIYLDYAATCPVDERVVKKMMEFLSIDGNFGNPASRSHKFGWQAEEAVDVARNHIADLIGADSREIVFTSGATEADNLALKGVMRFYQTKGKHLITCKTEHKAILDTCRQLEREGFEVTYLDPKSDGLIDLEELKSVIRDDTVLVSIMHANNEIGVVQDIAKIGEICRERKVLFHTDATQSVGKLPINLSELKVDLLSMSSHKLYGPKGIGALYVCRKPRVRLEAIIHGGGHERGMRSGTLPVHQIVGMGEAYRIAKEEMATEMPRLTALRDRLYNGLKDIEETYVNGSMEQRLGNNLNISFNYVEGESLMMALRDIAVSSGSACTSASLEPSYVLRALGLNDELAHSSIRFTVGRYTTAEEIDYAIGLVKSAVEKLRDLSPLWDMFKEGIDLNSIEWTHH.

Pyridoxal 5'-phosphate contacts are provided by residues 75–76 (AT), asparagine 155, glutamine 183, and 203–205 (SSH). N6-(pyridoxal phosphate)lysine is present on lysine 206. Residue threonine 243 coordinates pyridoxal 5'-phosphate. Cysteine 328 functions as the Cysteine persulfide intermediate in the catalytic mechanism. Cysteine 328 contributes to the [2Fe-2S] cluster binding site.

The protein belongs to the class-V pyridoxal-phosphate-dependent aminotransferase family. NifS/IscS subfamily. In terms of assembly, homodimer. Forms a heterotetramer with IscU, interacts with other sulfur acceptors. Requires pyridoxal 5'-phosphate as cofactor.

It localises to the cytoplasm. It catalyses the reaction (sulfur carrier)-H + L-cysteine = (sulfur carrier)-SH + L-alanine. It functions in the pathway cofactor biosynthesis; iron-sulfur cluster biosynthesis. Functionally, master enzyme that delivers sulfur to a number of partners involved in Fe-S cluster assembly, tRNA modification or cofactor biosynthesis. Catalyzes the removal of elemental sulfur atoms from cysteine to produce alanine. Functions as a sulfur delivery protein for Fe-S cluster synthesis onto IscU, an Fe-S scaffold assembly protein, as well as other S acceptor proteins. In Histophilus somni (strain 129Pt) (Haemophilus somnus), this protein is Cysteine desulfurase IscS.